Reading from the N-terminus, the 75-residue chain is Protein CYSTEINE-RICH TRANSMEMBRANE MODULE 5 (75 aa).

A disordered region spans residues 1–29 (MSQYSQNQYAGAYPTPPVSTGPYVAPPPL). Pro residues predominate over residues 14–29 (PTPPVSTGPYVAPPPL). A helical membrane pass occupies residues 52–69 (AADGFLKGCLATMLACCV).

This sequence belongs to the CYSTM1 family. As to quaternary structure, heterodimers. Interacts with CYSTM7 and WIH1/CYSTM13. Mostly expressed in roots, stems, rosette leaves and siliques and, to a lower extent, in flowers and cauline leaves.

It is found in the cell membrane. The protein resides in the nucleus. Functionally, involved in resistance to abiotic stress. The protein is Protein CYSTEINE-RICH TRANSMEMBRANE MODULE 5 of Arabidopsis thaliana (Mouse-ear cress).